The sequence spans 397 residues: MSEYIEHSPSGTSVGRVEKRFFTVAEADSPLTVESGRALGPVVLAYETCGQLNERADNAVLVLHALTGDSHAAGYYEPGDAKPGWWDLMIGPGKPIDTDRYYVICSNVIGGCMGSTGPSSLDPATGQPYGLTFPVITIGDMVRAQKRLVEHLGVTKLLSVVGGSMGGMQALEWSVRYPDMVRTAVPLATTTKHSALAIAFNEVARQAIMADPNWNGGNYYDGVPPAHGLAVGRMIGHITYLSDEAMRQKFDRRLQDRCENSFVLEEPDFQVESYLRYQGQKFVDRFDANSFLYITKAADYFNLEASHGCGSAVAAFAKAKCRYLVASFSSDWLYPTYQSRSMVQAMKKNGLDVSFVELEAKWGHDAFLLPNARLSGMIARFLDRALVDAAKEDARAL.

Positions 58-368 (NAVLVLHALT…EAKWGHDAFL (311 aa)) constitute an AB hydrolase-1 domain. S164 serves as the catalytic Nucleophile. Residue R233 participates in substrate binding. Residues D331 and H364 contribute to the active site. D365 is a binding site for substrate.

It belongs to the AB hydrolase superfamily. MetX family. As to quaternary structure, homodimer.

Its subcellular location is the cytoplasm. The catalysed reaction is L-homoserine + acetyl-CoA = O-acetyl-L-homoserine + CoA. Its pathway is amino-acid biosynthesis; L-methionine biosynthesis via de novo pathway; O-acetyl-L-homoserine from L-homoserine: step 1/1. Its function is as follows. Transfers an acetyl group from acetyl-CoA to L-homoserine, forming acetyl-L-homoserine. The chain is Homoserine O-acetyltransferase from Solidesulfovibrio magneticus (strain ATCC 700980 / DSM 13731 / RS-1) (Desulfovibrio magneticus).